Consider the following 206-residue polypeptide: Platelet glycoprotein Ib beta chain (206 aa).

The first 26 residues, 1–26 (MGSRPRGALSLLLLLLALLSRPASGC), serve as a signal peptide directing secretion. 2 disulfides stabilise this stretch: cysteine 26/cysteine 32 and cysteine 30/cysteine 39. Residues 27–55 (PAPCSCAGTLVDCGRRGLTWASLPAAFPP) form the LRRNT domain. Topologically, residues 27 to 147 (PAPCSCAGTL…RAACAPGLLC (121 aa)) are extracellular. The stretch at 60 to 83 (LVLTGNNLTALPPGLLDALPALRA) is one LRR repeat. Asparagine 66 is a glycosylation site (N-linked (GlcNAc...) asparagine). The region spanning 89 to 143 (NPWRCDCRLLPLRAWLAGRPERAPYRDLRCVAPPALRGRLLPYVAEDELRAACAP) is the LRRCT domain. Disulfide bonds link cysteine 93–cysteine 118 and cysteine 95–cysteine 141. Residues 148–172 (WGALVAQLALLVLGLLHALLLALLL) traverse the membrane as a helical segment. At 173–206 (GRLRRLRARARARSIQEFSLTAPLVAESARGGAS) the chain is on the cytoplasmic side. Phosphoserine occurs at positions 186 and 191. Threonine 193 carries the post-translational modification Phosphothreonine. Residue serine 200 is modified to Phosphoserine.

In terms of assembly, two GP-Ib beta are disulfide-linked to one GP-Ib alpha. GP-IX is complexed with the GP-Ib heterodimer via a non covalent linkage. Interacts with TRAF4.

It localises to the membrane. Functionally, gp-Ib, a surface membrane protein of platelets, participates in the formation of platelet plugs by binding to von Willebrand factor, which is already bound to the subendothelium. The chain is Platelet glycoprotein Ib beta chain (Gp1bb) from Mus musculus (Mouse).